The primary structure comprises 203 residues: Imidazoleglycerol-phosphate dehydratase (203 aa).

It belongs to the imidazoleglycerol-phosphate dehydratase family.

Its subcellular location is the cytoplasm. The enzyme catalyses D-erythro-1-(imidazol-4-yl)glycerol 3-phosphate = 3-(imidazol-4-yl)-2-oxopropyl phosphate + H2O. It functions in the pathway amino-acid biosynthesis; L-histidine biosynthesis; L-histidine from 5-phospho-alpha-D-ribose 1-diphosphate: step 6/9. The polypeptide is Imidazoleglycerol-phosphate dehydratase (Salinispora arenicola (strain CNS-205)).